The primary structure comprises 4830 residues: Siderophore peptide synthetase fer3 (4830 aa).

Residues 197–623 form an adenylation 1 region; the sequence is LDQAEKFPDR…LGRMNAEQVK (427 aa). The Carrier 1 domain occupies 751–833; it reads ANEDPVTQAL…DLIPLLSDTT (83 aa). Serine 788 bears the O-(pantetheine 4'-phosphoryl)serine mark. Residues 879–1317 are condensation 1; it reads QKIFPTTATQ…HSLMREPETT (439 aa). Residues 1358–1781 form an adenylation 2 region; it reads FENKAATEPE…IGRRDDLVKL (424 aa). Residues 1929 to 2005 form the Carrier 2 domain; it reads GEDGDLQCQV…MLIRGLATKT (77 aa). Serine 1966 is subject to O-(pantetheine 4'-phosphoryl)serine. The interval 2048–2503 is condensation 2; sequence IPCSTLQEGM…LLDQVVSLLT (456 aa). Positions 2573–2977 are adenylation 3; the sequence is AGTPETACIN…LGRRDEQEKI (405 aa). Positions 3122-3198 constitute a Carrier 3 domain; sequence RPLSSLEREI…DIAAELSDSK (77 aa). The residue at position 3159 (serine 3159) is an O-(pantetheine 4'-phosphoryl)serine. The segment at 3232–3621 is condensation 3; sequence KVLPCLPSQE…RDRDELRISA (390 aa). In terms of domain architecture, Carrier 4 spans 3685-3760; sequence TAAEEQIRDL…GLSKLLDQRQ (76 aa). Position 3720 is an O-(pantetheine 4'-phosphoryl)serine (serine 3720). The interval 3779–4199 is condensation 4; that stretch reads RYKATPLQAG…GVQIKAGASD (421 aa). One can recognise a Carrier 5 domain in the interval 4264–4340; that stretch reads SLSTAEQDIV…RLTVATETRS (77 aa). Serine 4301 is modified (O-(pantetheine 4'-phosphoryl)serine). The tract at residues 4381–4708 is condensation 5; it reads VLPLLTGQQQ…DLVSRAEHQQ (328 aa).

Belongs to the NRP synthetase family.

It participates in siderophore biosynthesis. Nonribosomal peptide synthetase; part of the gene cluster that mediates the biosynthesis of siderophore ferrichrome A which is contributing to organismal virulence. The first step of ferrichrome A biosynthesis is performed by the HMG-CoA synthase hcs1 which catalyzes the generation of HMG-CoA and CoA using acetoacetyl-CoA and acetyl-CoA as substrates. The enoyl-CoA isomerase/hydratase fer4 then catalyzes the conversion of hcs1-produced HMG-CoA to methylglutaconyl-CoA. The acyltransferase fer5 then fuses the fer4-generated methylglutaconyl-CoA with sid1-generated hydroxyornithine to yield methylglutaconyl hydroxyornithine. Methylglutaconyl hydroxyornithine is then available for use by the NRPS fer3 to generate ferrichrome A. The chain is Siderophore peptide synthetase fer3 from Mycosarcoma maydis (Corn smut fungus).